Consider the following 1033-residue polypeptide: Error-prone DNA polymerase (1033 aa).

This sequence belongs to the DNA polymerase type-C family. DnaE2 subfamily.

The protein resides in the cytoplasm. It carries out the reaction DNA(n) + a 2'-deoxyribonucleoside 5'-triphosphate = DNA(n+1) + diphosphate. In terms of biological role, DNA polymerase involved in damage-induced mutagenesis and translesion synthesis (TLS). It is not the major replicative DNA polymerase. This is Error-prone DNA polymerase from Teredinibacter turnerae (strain ATCC 39867 / T7901).